Here is a 221-residue protein sequence, read N- to C-terminus: 7-cyano-7-deazaguanine synthase (221 aa).

8-18 (MSGGMDSTLCA) contacts ATP. Zn(2+) is bound by residues Cys187, Cys195, Cys198, and Cys201.

The protein belongs to the QueC family. It depends on Zn(2+) as a cofactor.

The enzyme catalyses 7-carboxy-7-deazaguanine + NH4(+) + ATP = 7-cyano-7-deazaguanine + ADP + phosphate + H2O + H(+). Its pathway is purine metabolism; 7-cyano-7-deazaguanine biosynthesis. Catalyzes the ATP-dependent conversion of 7-carboxy-7-deazaguanine (CDG) to 7-cyano-7-deazaguanine (preQ(0)). In Campylobacter concisus (strain 13826), this protein is 7-cyano-7-deazaguanine synthase.